A 201-amino-acid polypeptide reads, in one-letter code: 3-isopropylmalate dehydratase small subunit (201 aa).

The protein belongs to the LeuD family. LeuD type 1 subfamily. As to quaternary structure, heterodimer of LeuC and LeuD.

The enzyme catalyses (2R,3S)-3-isopropylmalate = (2S)-2-isopropylmalate. It participates in amino-acid biosynthesis; L-leucine biosynthesis; L-leucine from 3-methyl-2-oxobutanoate: step 2/4. Functionally, catalyzes the isomerization between 2-isopropylmalate and 3-isopropylmalate, via the formation of 2-isopropylmaleate. This is 3-isopropylmalate dehydratase small subunit from Xanthobacter autotrophicus (strain ATCC BAA-1158 / Py2).